The primary structure comprises 259 residues: Global transcriptional regulator CodY (259 aa).

Residues 1-155 are GAF domain; that stretch reads MELLAKTRKL…SSTVVGMEIL (155 aa). The segment at residues 203-222 is a DNA-binding region (H-T-H motif); sequence ASKIADRVGITRSVIVNALR. Ser215 is subject to Phosphoserine.

This sequence belongs to the CodY family.

It is found in the cytoplasm. DNA-binding global transcriptional regulator which is involved in the adaptive response to starvation and acts by directly or indirectly controlling the expression of numerous genes in response to nutrient availability. During rapid exponential growth, CodY is highly active and represses genes whose products allow adaptation to nutrient depletion. The chain is Global transcriptional regulator CodY from Bacillus cereus (strain B4264).